Consider the following 188-residue polypeptide: Elongation factor P-like protein (188 aa).

This sequence belongs to the elongation factor P family.

The protein is Elongation factor P-like protein of Stenotrophomonas maltophilia (strain R551-3).